The sequence spans 619 residues: Chitinase C (619 aa).

Positions 1–30 are cleaved as a signal peptide; sequence MRFRHKAAALAATLALPLAGLVGLASPAQA. The region spanning 31–134 is the CBM2 domain; sequence ATSATATFAK…KLNGGSCDGT (104 aa). The 86-residue stretch at 144 to 229 folds into the Fibronectin type-III domain; the sequence is APGTPTASNI…GAVKVTTTGG (86 aa). Positions 212-236 are disordered; sequence ADQTGPASGAVKVTTTGGGDGGNPG. The segment covering 227–236 has biased composition (gly residues); the sequence is TGGGDGGNPG. Residues 240–619 form the GH18 domain; it reads EVKMGYFTNW…TPAVRTTRRH (380 aa). Residues 312 to 313 and 339 to 342 contribute to the chitin site; these read DQ and GGWT. The active-site Proton donor is the E382. Residues Y383, 449 to 452, and W589 each bind chitin; that span reads MTYD.

The protein belongs to the glycosyl hydrolase 18 family. Chitinase class II subfamily.

It catalyses the reaction Random endo-hydrolysis of N-acetyl-beta-D-glucosaminide (1-&gt;4)-beta-linkages in chitin and chitodextrins.. The chain is Chitinase C (chiC) from Streptomyces lividans.